The sequence spans 444 residues: ATP-dependent protease ATPase subunit HslU (444 aa).

Residues isoleucine 18, 60–65, aspartate 256, glutamate 322, and arginine 394 each bind ATP; that span reads GVGKTE.

This sequence belongs to the ClpX chaperone family. HslU subfamily. In terms of assembly, a double ring-shaped homohexamer of HslV is capped on each side by a ring-shaped HslU homohexamer. The assembly of the HslU/HslV complex is dependent on binding of ATP.

It localises to the cytoplasm. In terms of biological role, ATPase subunit of a proteasome-like degradation complex; this subunit has chaperone activity. The binding of ATP and its subsequent hydrolysis by HslU are essential for unfolding of protein substrates subsequently hydrolyzed by HslV. HslU recognizes the N-terminal part of its protein substrates and unfolds these before they are guided to HslV for hydrolysis. This is ATP-dependent protease ATPase subunit HslU from Klebsiella pneumoniae subsp. pneumoniae (strain ATCC 700721 / MGH 78578).